The following is an 82-amino-acid chain: U17-hexatoxin-Hi1a (82 aa).

An N-terminal signal peptide occupies residues 1–21 (MKTIFAVTLLLFAIYVPECMP). 5 cysteine pairs are disulfide-bonded: C22–C33, C27–C48, C32–C61, C58–C69, and C63–C75.

In terms of tissue distribution, expressed by the venom gland.

It localises to the secreted. Its function is as follows. Probable ion channel inhibitor. In Hadronyche infensa (Fraser island funnel-web spider), this protein is U17-hexatoxin-Hi1a.